Here is a 725-residue protein sequence, read N- to C-terminus: Catalase-peroxidase (725 aa).

Residues 99-227 (WHAAGTYRIA…LAAVMMGLIY (129 aa)) constitute a cross-link (tryptophyl-tyrosyl-methioninium (Trp-Tyr) (with M-253)). H100 acts as the Proton acceptor in catalysis. Positions 227-253 (YVNPEGVDGNPDPLKTAHDIRITFSRM) form a cross-link, tryptophyl-tyrosyl-methioninium (Tyr-Met) (with W-99). H268 serves as a coordination point for heme b.

The protein belongs to the peroxidase family. Peroxidase/catalase subfamily. As to quaternary structure, homodimer or homotetramer. It depends on heme b as a cofactor. Formation of the three residue Trp-Tyr-Met cross-link is important for the catalase, but not the peroxidase activity of the enzyme.

It catalyses the reaction H2O2 + AH2 = A + 2 H2O. The catalysed reaction is 2 H2O2 = O2 + 2 H2O. Bifunctional enzyme with both catalase and broad-spectrum peroxidase activity. The protein is Catalase-peroxidase of Picosynechococcus sp. (strain ATCC 27264 / PCC 7002 / PR-6) (Agmenellum quadruplicatum).